The chain runs to 887 residues: Phosphatidylinositol 3-kinase catalytic subunit type 3 (887 aa).

The C2 PI3K-type domain maps to 35–184 (YKAVLEDPML…LAKLTKAHRQ (150 aa)). A disordered region spans residues 149–170 (VEADGSEPTRTPGRTSSTLSED). Over residues 156–170 (PTRTPGRTSSTLSED) the composition is skewed to polar residues. Position 163 is a phosphothreonine; by AMPK (threonine 163). Position 165 is a phosphoserine; by AMPK (serine 165). Residues serine 244, serine 261, and serine 282 each carry the phosphoserine modification. The 238-residue stretch at 283-520 (DHDLKPNATT…PKTHEMYLNV (238 aa)) folds into the PIK helical domain. Residues 415–466 (LEPTKKDSQTSASESLSNSGVSSGDIDSSQIITNPLPPVASPPPASKAKEVS) are disordered. Low complexity predominate over residues 425–437 (SASESLSNSGVSS). Over residues 449–459 (PLPPVASPPPA) the composition is skewed to pro residues. A PI3K/PI4K catalytic domain is found at 605-871 (IPETATLFKS…LIDESVHALF (267 aa)). The segment at 611 to 617 (LFKSALM) is G-loop. Positions 740–748 (GVGDRHLDN) are catalytic loop. Positions 759-780 (HIDFGYILGRDPKPLPPPMKLN) are activation loop.

It belongs to the PI3/PI4-kinase family. As to quaternary structure, component of the PI3K (PI3KC3/PI3K-III/class III phosphatidylinositol 3-kinase) complex the core of which is composed of the catalytic subunit PIK3C3, the regulatory subunit PIK3R4 and BECN1 associating with additional regulatory/auxiliary subunits to form alternative complex forms. Alternative complex forms containing a fourth regulatory subunit in a mutually exclusive manner are: the PI3K complex I (PI3KC3-C1) containing ATG14, and the PI3K complex II (PI3KC3-C2) containing UVRAG. PI3KC3-C1 displays a V-shaped architecture with PIK3R4 serving as a bridge between PIK3C3 and the ATG14:BECN1 subcomplex. Both, PI3KC3-C1 and PI3KC3-C2, can associate with further regulatory subunits such as RUBCN, SH3GLB1/Bif-1 and AMBRA1. PI3KC3-C1 probably associates with PIK3CB. Interacts with RAB7A in the presence of PIK3R4. Interacts with AMBRA1. Interacts with BECN1P1/BECN2. Interacts with SLAMF1. May be a component of a complex composed of RAB5A (in GDP-bound form), DYN2 and PIK3C3. Interacts with NCKAP1L. Interacts with ATG14; this interaction is increased in the absence of TMEM39A. Interacts with STEEP1; the interaction is STING1-dependent and required for trafficking of STING1 from the endoplasmic reticulum. Interacts with YWHAG. Interacts with ARMC3. Mn(2+) is required as a cofactor. Post-translationally, ubiquitinated via 'Lys-29'- and 'Lys-48'-linked ubiquitination by UBE3C, promoting its degradation. Deubiquitination by ZRANB1/TRABID promotes its stabilization, leading to autophagosome maturation.

The protein localises to the midbody. It localises to the late endosome. It is found in the cytoplasmic vesicle. The protein resides in the autophagosome. The catalysed reaction is a 1,2-diacyl-sn-glycero-3-phospho-(1D-myo-inositol) + ATP = a 1,2-diacyl-sn-glycero-3-phospho-(1D-myo-inositol-3-phosphate) + ADP + H(+). Functionally, catalytic subunit of the PI3K complex that mediates formation of phosphatidylinositol 3-phosphate; different complex forms are believed to play a role in multiple membrane trafficking pathways: PI3KC3-C1 is involved in initiation of autophagosomes and PI3KC3-C2 in maturation of autophagosomes and endocytosis. As part of PI3KC3-C1, promotes endoplasmic reticulum membrane curvature formation prior to vesicle budding. Involved in regulation of degradative endocytic trafficking and required for the abscission step in cytokinesis, probably in the context of PI3KC3-C2. Involved in the transport of lysosomal enzyme precursors to lysosomes. Required for transport from early to late endosomes. The chain is Phosphatidylinositol 3-kinase catalytic subunit type 3 from Mus musculus (Mouse).